A 379-amino-acid chain; its full sequence is UDP-N-acetylglucosamine--N-acetylmuramyl-(pentapeptide) pyrophosphoryl-undecaprenol N-acetylglucosamine transferase (379 aa).

UDP-N-acetyl-alpha-D-glucosamine-binding positions include 17–19 (TGG), Asn128, Arg169, Ser197, and Gln298.

Belongs to the glycosyltransferase 28 family. MurG subfamily.

Its subcellular location is the cell inner membrane. The enzyme catalyses di-trans,octa-cis-undecaprenyl diphospho-N-acetyl-alpha-D-muramoyl-L-alanyl-D-glutamyl-meso-2,6-diaminopimeloyl-D-alanyl-D-alanine + UDP-N-acetyl-alpha-D-glucosamine = di-trans,octa-cis-undecaprenyl diphospho-[N-acetyl-alpha-D-glucosaminyl-(1-&gt;4)]-N-acetyl-alpha-D-muramoyl-L-alanyl-D-glutamyl-meso-2,6-diaminopimeloyl-D-alanyl-D-alanine + UDP + H(+). It participates in cell wall biogenesis; peptidoglycan biosynthesis. In terms of biological role, cell wall formation. Catalyzes the transfer of a GlcNAc subunit on undecaprenyl-pyrophosphoryl-MurNAc-pentapeptide (lipid intermediate I) to form undecaprenyl-pyrophosphoryl-MurNAc-(pentapeptide)GlcNAc (lipid intermediate II). This chain is UDP-N-acetylglucosamine--N-acetylmuramyl-(pentapeptide) pyrophosphoryl-undecaprenol N-acetylglucosamine transferase, found in Brucella canis (strain ATCC 23365 / NCTC 10854 / RM-666).